Reading from the N-terminus, the 105-residue chain is Large ribosomal subunit protein bL21 (105 aa).

This sequence belongs to the bacterial ribosomal protein bL21 family. In terms of assembly, part of the 50S ribosomal subunit. Contacts protein L20.

Its function is as follows. This protein binds to 23S rRNA in the presence of protein L20. The polypeptide is Large ribosomal subunit protein bL21 (Stenotrophomonas maltophilia (strain R551-3)).